Consider the following 76-residue polypeptide: Large ribosomal subunit protein uL24 (76 aa).

This sequence belongs to the universal ribosomal protein uL24 family. As to quaternary structure, part of the 50S ribosomal subunit.

One of two assembly initiator proteins, it binds directly to the 5'-end of the 23S rRNA, where it nucleates assembly of the 50S subunit. Its function is as follows. One of the proteins that surrounds the polypeptide exit tunnel on the outside of the subunit. The sequence is that of Large ribosomal subunit protein uL24 from Wolinella succinogenes (strain ATCC 29543 / DSM 1740 / CCUG 13145 / JCM 31913 / LMG 7466 / NCTC 11488 / FDC 602W) (Vibrio succinogenes).